The following is a 401-amino-acid chain: 8-amino-7-oxononanoate synthase (401 aa).

Position 24 (arginine 24) interacts with substrate. 111-112 lines the pyridoxal 5'-phosphate pocket; that stretch reads GF. Histidine 137 contributes to the substrate binding site. Pyridoxal 5'-phosphate contacts are provided by serine 183, histidine 211, and threonine 240. Position 243 is an N6-(pyridoxal phosphate)lysine (lysine 243). Substrate is bound at residue threonine 357.

The protein belongs to the class-II pyridoxal-phosphate-dependent aminotransferase family. BioF subfamily. In terms of assembly, homodimer. Pyridoxal 5'-phosphate is required as a cofactor.

The enzyme catalyses 6-carboxyhexanoyl-[ACP] + L-alanine + H(+) = (8S)-8-amino-7-oxononanoate + holo-[ACP] + CO2. The protein operates within cofactor biosynthesis; biotin biosynthesis. Catalyzes the decarboxylative condensation of pimeloyl-[acyl-carrier protein] and L-alanine to produce 8-amino-7-oxononanoate (AON), [acyl-carrier protein], and carbon dioxide. This Xylella fastidiosa (strain M12) protein is 8-amino-7-oxononanoate synthase.